The sequence spans 383 residues: S-adenosylmethionine synthase (383 aa).

Residue H15 coordinates ATP. Residue D17 coordinates Mg(2+). E43 contributes to the K(+) binding site. L-methionine contacts are provided by E56 and Q99. The interval 99–109 (QSPDINQGVDR) is flexible loop. ATP is bound by residues 164-166 (DAK), 230-231 (RF), D239, 245-246 (RK), A262, and K266. L-methionine is bound at residue D239. Residue K270 coordinates L-methionine.

It belongs to the AdoMet synthase family. As to quaternary structure, homotetramer; dimer of dimers. Mg(2+) is required as a cofactor. The cofactor is K(+).

The protein localises to the cytoplasm. The catalysed reaction is L-methionine + ATP + H2O = S-adenosyl-L-methionine + phosphate + diphosphate. It functions in the pathway amino-acid biosynthesis; S-adenosyl-L-methionine biosynthesis; S-adenosyl-L-methionine from L-methionine: step 1/1. Catalyzes the formation of S-adenosylmethionine (AdoMet) from methionine and ATP. The overall synthetic reaction is composed of two sequential steps, AdoMet formation and the subsequent tripolyphosphate hydrolysis which occurs prior to release of AdoMet from the enzyme. The polypeptide is S-adenosylmethionine synthase (Shewanella sp. (strain ANA-3)).